Consider the following 1133-residue polypeptide: DNA-directed RNA polymerase subunit beta (1133 aa).

The interval 1085-1133 is disordered; it reads ADVSSRHTPSRPTYESVTSEDLSPAAGGTFTLARRSREEDEDREEEDDF. Residues 1090–1105 are compositionally biased toward polar residues; the sequence is RHTPSRPTYESVTSED. Positions 1123 to 1133 are enriched in acidic residues; it reads EDEDREEEDDF.

The protein belongs to the RNA polymerase beta chain family. In cyanobacteria the RNAP catalytic core is composed of 2 alpha, 1 beta, 1 beta', 1 gamma and 1 omega subunit. When a sigma factor is associated with the core the holoenzyme is formed, which can initiate transcription.

The catalysed reaction is RNA(n) + a ribonucleoside 5'-triphosphate = RNA(n+1) + diphosphate. Functionally, DNA-dependent RNA polymerase catalyzes the transcription of DNA into RNA using the four ribonucleoside triphosphates as substrates. The polypeptide is DNA-directed RNA polymerase subunit beta (Synechococcus sp. (strain JA-3-3Ab) (Cyanobacteria bacterium Yellowstone A-Prime)).